Reading from the N-terminus, the 648-residue chain is DNA gyrase subunit B (648 aa).

The Toprim domain occupies Arg-432 to Pro-546. 3 residues coordinate Mg(2+): Glu-438, Asp-511, and Asp-513.

Belongs to the type II topoisomerase GyrB family. As to quaternary structure, heterotetramer, composed of two GyrA and two GyrB chains. In the heterotetramer, GyrA contains the active site tyrosine that forms a transient covalent intermediate with DNA, while GyrB binds cofactors and catalyzes ATP hydrolysis. Mg(2+) is required as a cofactor. The cofactor is Mn(2+). Ca(2+) serves as cofactor.

It localises to the cytoplasm. The catalysed reaction is ATP-dependent breakage, passage and rejoining of double-stranded DNA.. A type II topoisomerase that negatively supercoils closed circular double-stranded (ds) DNA in an ATP-dependent manner to modulate DNA topology and maintain chromosomes in an underwound state. Negative supercoiling favors strand separation, and DNA replication, transcription, recombination and repair, all of which involve strand separation. Also able to catalyze the interconversion of other topological isomers of dsDNA rings, including catenanes and knotted rings. Type II topoisomerases break and join 2 DNA strands simultaneously in an ATP-dependent manner. This chain is DNA gyrase subunit B, found in Metamycoplasma hominis (strain ATCC 23114 / DSM 25592 / NBRC 14850 / NCTC 10111 / PG21) (Mycoplasma hominis).